The chain runs to 473 residues: Adenosylhomocysteinase (473 aa).

Thr60, Asp135, and Glu197 together coordinate substrate. 198–200 (TTT) serves as a coordination point for NAD(+). The substrate site is built by Lys227 and Asp231. NAD(+) contacts are provided by residues Asn232, 261–266 (GFGDVG), Glu284, Asn319, 340–342 (IGH), and Asn385.

The protein belongs to the adenosylhomocysteinase family. It depends on NAD(+) as a cofactor.

The protein localises to the cytoplasm. It carries out the reaction S-adenosyl-L-homocysteine + H2O = L-homocysteine + adenosine. The protein operates within amino-acid biosynthesis; L-homocysteine biosynthesis; L-homocysteine from S-adenosyl-L-homocysteine: step 1/1. Its function is as follows. May play a key role in the regulation of the intracellular concentration of adenosylhomocysteine. In Bradyrhizobium sp. (strain BTAi1 / ATCC BAA-1182), this protein is Adenosylhomocysteinase.